The following is a 41-amino-acid chain: Antimicrobial protein PN-AMP1 (41 aa).

Glutamine 1 is subject to Pyrrolidone carboxylic acid. Residues 1-41 (QQCGRQASGRLCGNRLCCSQWGYCGSTASYCGAGCQSQCRS) form the Chitin-binding type-1 domain. Cystine bridges form between cysteine 3-cysteine 18, cysteine 12-cysteine 24, cysteine 17-cysteine 31, and cysteine 35-cysteine 39.

Functionally, chitin-binding protein with a defensive function against numerous chitin containing fungal pathogens. It is also an inhibitor of Gram-positive bacteria such as B.subtilis. The protein is Antimicrobial protein PN-AMP1 of Ipomoea nil (Japanese morning glory).